Here is a 683-residue protein sequence, read N- to C-terminus: Tripartite terminase subunit 3 (683 aa).

The Walker A motif motif lies at 217 to 224 (IPRRHGKT). The Walker B motif signature appears at 312-317 (LLYIDE). Glu-317 acts as the For ATPase activity in catalysis. Active-site for nuclease activity residues include Asp-472, Glu-546, and Asp-658.

It belongs to the herpesviridae TRM3 protein family. As to quaternary structure, interacts with the terminase subunits TRM1 and TRM2. Interacts with portal protein.

Its subcellular location is the host nucleus. Its function is as follows. Component of the molecular motor that translocates viral genomic DNA in empty capsid during DNA packaging. Forms a tripartite terminase complex together with TRM1 and TRM2 in the host cytoplasm. Once the complex reaches the host nucleus, it interacts with the capsid portal vertex. This portal forms a ring in which genomic DNA is translocated into the capsid. TRM3 carries an RNase H-like nuclease activity that plays an important role for the cleavage of concatemeric viral DNA into unit length genomes. The sequence is that of Tripartite terminase subunit 3 from Saimiri sciureus (Common squirrel monkey).